The following is a 419-amino-acid chain: Creatine kinase S-type, mitochondrial (419 aa).

The N-terminal 39 residues, 1-39, are a transit peptide targeting the mitochondrion; it reads MASTFSKLLTGRNASLLFATLGTSALTTGYLVNRQKVCA. Positions 40 to 64 are cardiolipin-binding; sequence EARDQHKLFPPSADYPDLRKHNNCM. The 87-residue stretch at 46 to 132 folds into the Phosphagen kinase N-terminal domain; the sequence is KLFPPSADYP…FDPVIKLRHN (87 aa). The region spanning 159–401 is the Phosphagen kinase C-terminal domain; that stretch reads YVLSSRVRTG…NYLVDCEKKL (243 aa). ATP-binding positions include 162-166 and His225; that span reads SSRVR. Tyr255 carries the post-translational modification Phosphotyrosine. ATP is bound by residues Arg270, Arg326, 354 to 359, and Asp369; that span reads RGTGGV. Thr356 carries the post-translational modification Phosphothreonine.

This sequence belongs to the ATP:guanido phosphotransferase family. As to quaternary structure, exists as an octamer composed of four CKMT2 homodimers.

It is found in the mitochondrion inner membrane. It catalyses the reaction creatine + ATP = N-phosphocreatine + ADP + H(+). Functionally, reversibly catalyzes the transfer of phosphate between ATP and various phosphogens (e.g. creatine phosphate). Creatine kinase isoenzymes play a central role in energy transduction in tissues with large, fluctuating energy demands, such as skeletal muscle, heart, brain and spermatozoa. This chain is Creatine kinase S-type, mitochondrial (CKMT2), found in Oryctolagus cuniculus (Rabbit).